Here is a 189-residue protein sequence, read N- to C-terminus: EFLFARTMIGVFKNIEYMCNRTSSKTWGKEAWKKIVVCIVSDRRAKINPRTRAVLAGLGVYQDGIAKQQVNGKDVTAHIYEYTTQVGLELKGTQVSLKPRSATPVQLLFCLKEKNQKKINSHRWFFQAFGRVLDPNICVLIDAGTKPGKDSIYQLWKAFDLEPMCGGACGEIKVMLDHGKKLYNPLIAT.

It belongs to the chitin synthase family. Class I subfamily.

The protein localises to the cell membrane. It carries out the reaction [(1-&gt;4)-N-acetyl-beta-D-glucosaminyl](n) + UDP-N-acetyl-alpha-D-glucosamine = [(1-&gt;4)-N-acetyl-beta-D-glucosaminyl](n+1) + UDP + H(+). Its function is as follows. Polymerizes chitin, a structural polymer of the cell wall and septum, by transferring the sugar moiety of UDP-GlcNAc to the non-reducing end of the growing chitin polymer. This chain is Chitin synthase 1 (CHS1), found in Rhinocladiella atrovirens.